The chain runs to 253 residues: MLIEDTIFYRPDWKWHNFLKYLVNNLSKYNCLEKKIPSEYSYKDSTYGSKKSKKNVNLSTWGVTHKKRIQFARAVCINSPNYSVLNFLIIPNTIYNVPFFGVDFVSLPNSHLLVLDFQPSLKIQNQYNNELLEKLIKLKNHCHSSLPLAEKMSADVARFFSPGVIWSKLPKEERSDFLIANQLYTSFKEYLDLYLEILFESQQVNLNLQKELINGQNNYLKYRIDNDPARPMLSSLFGKEFTESLIKEVLFTT.

It belongs to the HY2 family.

It carries out the reaction (3Z)-phycoerythrobilin + oxidized 2[4Fe-4S]-[ferredoxin] = 15,16-dihydrobiliverdin + reduced 2[4Fe-4S]-[ferredoxin] + 2 H(+). Functionally, catalyzes the two-electron reduction of the C2 and C3(1) diene system of 15,16-dihydrobiliverdin. In Prochlorococcus marinus (strain MIT 9312), this protein is Phycoerythrobilin:ferredoxin oxidoreductase.